Reading from the N-terminus, the 258-residue chain is 5'-nucleotidase SurE (258 aa).

Residues aspartate 16, aspartate 17, serine 47, and asparagine 99 each contribute to the a divalent metal cation site.

The protein belongs to the SurE nucleotidase family. The cofactor is a divalent metal cation.

Its subcellular location is the cytoplasm. The catalysed reaction is a ribonucleoside 5'-phosphate + H2O = a ribonucleoside + phosphate. Its function is as follows. Nucleotidase that shows phosphatase activity on nucleoside 5'-monophosphates. This Coxiella burnetii (strain CbuK_Q154) (Coxiella burnetii (strain Q154)) protein is 5'-nucleotidase SurE.